A 345-amino-acid polypeptide reads, in one-letter code: tRNA-specific 2-thiouridylase MnmA 1 (345 aa).

ATP contacts are provided by residues glycine 9–serine 16 and leucine 35. The active-site Nucleophile is the cysteine 96. Cysteine 96 and cysteine 191 are oxidised to a cystine. Glycine 120 lines the ATP pocket. Residues lysine 138–glutamine 140 are interaction with tRNA. Residue cysteine 191 is the Cysteine persulfide intermediate of the active site. The interaction with tRNA stretch occupies residues arginine 293–tyrosine 294.

The protein belongs to the MnmA/TRMU family.

The protein localises to the cytoplasm. It catalyses the reaction S-sulfanyl-L-cysteinyl-[protein] + uridine(34) in tRNA + AH2 + ATP = 2-thiouridine(34) in tRNA + L-cysteinyl-[protein] + A + AMP + diphosphate + H(+). Its function is as follows. Catalyzes the 2-thiolation of uridine at the wobble position (U34) of tRNA, leading to the formation of s(2)U34. This Aliarcobacter butzleri (strain RM4018) (Arcobacter butzleri) protein is tRNA-specific 2-thiouridylase MnmA 1.